Reading from the N-terminus, the 179-residue chain is Large ribosomal subunit protein uL5 (179 aa).

Belongs to the universal ribosomal protein uL5 family. As to quaternary structure, part of the 50S ribosomal subunit; part of the 5S rRNA/L5/L18/L25 subcomplex. Contacts the 5S rRNA and the P site tRNA. Forms a bridge to the 30S subunit in the 70S ribosome.

This is one of the proteins that bind and probably mediate the attachment of the 5S RNA into the large ribosomal subunit, where it forms part of the central protuberance. In the 70S ribosome it contacts protein S13 of the 30S subunit (bridge B1b), connecting the 2 subunits; this bridge is implicated in subunit movement. Contacts the P site tRNA; the 5S rRNA and some of its associated proteins might help stabilize positioning of ribosome-bound tRNAs. This Albidiferax ferrireducens (strain ATCC BAA-621 / DSM 15236 / T118) (Rhodoferax ferrireducens) protein is Large ribosomal subunit protein uL5.